Here is a 248-residue protein sequence, read N- to C-terminus: PACRG-like protein (248 aa).

Met-1 carries the N-acetylmethionine modification. Residues 1–29 are compositionally biased toward polar residues; sequence MQKSEGSGGTQLKNRATGNYDQRTSSSTQ. Positions 1-71 are disordered; the sequence is MQKSEGSGGT…LNPKTINPFG (71 aa). Over residues 39-49 the composition is skewed to low complexity; it reads SKSSLSTSSPE. Ser-47 is modified (phosphoserine).

This chain is PACRG-like protein (PACRGL), found in Homo sapiens (Human).